The following is a 579-amino-acid chain: L-arabinonate dehydratase (579 aa).

C59 lines the [2Fe-2S] cluster pocket. E91 is a Mg(2+) binding site. C127 provides a ligand contact to [2Fe-2S] cluster. D128 contacts Mg(2+). [2Fe-2S] cluster is bound at residue C200. E453 provides a ligand contact to Mg(2+).

Belongs to the IlvD/Edd family. In terms of assembly, homotetramer. [2Fe-2S] cluster serves as cofactor. Mg(2+) is required as a cofactor.

It catalyses the reaction L-arabinonate = 2-dehydro-3-deoxy-L-arabinonate + H2O. It carries out the reaction D-galactonate = 2-dehydro-3-deoxy-D-galactonate + H2O. The catalysed reaction is D-fuconate = 2-dehydro-3-deoxy-D-fuconate + H2O. It functions in the pathway carbohydrate metabolism. Catalyzes the dehydration of L-arabinonate to 2-dehydro-3-deoxy-L-arabinonate during L-arabinose degradation. Can also dehydrate D-galactonate and D-fuconate with good catalytic efficiency. Has weak activity with D-xylonate and D-gluconate. In Rhizobium leguminosarum bv. trifolii (strain WSM2304), this protein is L-arabinonate dehydratase.